Consider the following 122-residue polypeptide: Insulin-like growth factor 1 (122 aa).

The interval glycine 49 to threonine 77 is b. 3 cysteine pairs are disulfide-bonded: cysteine 54-cysteine 96, cysteine 66-cysteine 109, and cysteine 95-cysteine 100. Positions glycine 78 to threonine 89 are c. An a region spans residues glycine 90 to alanine 110. The tract at residues proline 111–alanine 118 is d. The propeptide at arginine 119 to arginine 122 is e peptide.

The protein belongs to the insulin family. As to quaternary structure, forms a ternary complex with IGFR1 and ITGAV:ITGB3. Forms a ternary complex with IGFR1 and ITGA6:ITGB4. Forms a ternary complex with IGFBP3 and ALS.

It localises to the secreted. In terms of biological role, the insulin-like growth factors, isolated from plasma, are structurally and functionally related to insulin but have a much higher growth-promoting activity. May be a physiological regulator of [1-14C]-2-deoxy-D-glucose (2DG) transport and glycogen synthesis in osteoblasts. Stimulates glucose transport in bone-derived osteoblastic (PyMS) cells and is effective at much lower concentrations than insulin, not only regarding glycogen and DNA synthesis but also with regard to enhancing glucose uptake. May play a role in synapse maturation. Ca(2+)-dependent exocytosis of IGF1 is required for sensory perception of smell in the olfactory bulb. Acts as a ligand for IGF1R. Binds to the alpha subunit of IGF1R, leading to the activation of the intrinsic tyrosine kinase activity which autophosphorylates tyrosine residues in the beta subunit thus initiating a cascade of down-stream signaling events leading to activation of the PI3K-AKT/PKB and the Ras-MAPK pathways. Binds to integrins ITGAV:ITGB3 and ITGA6:ITGB4. Its binding to integrins and subsequent ternary complex formation with integrins and IGFR1 are essential for IGF1 signaling. Induces the phosphorylation and activation of IGFR1, MAPK3/ERK1, MAPK1/ERK2 and AKT1. As part of the MAPK/ERK signaling pathway, acts as a negative regulator of apoptosis in cardiomyocytes via promotion of STUB1/CHIP-mediated ubiquitination and degradation of ICER-type isoforms of CREM. The protein is Insulin-like growth factor 1 of Equus caballus (Horse).